Here is a 671-residue protein sequence, read N- to C-terminus: Gametogenetin-binding protein 2-like (671 aa).

2 disordered regions span residues 372-489 (REQK…ARVQ) and 532-562 (VRDS…SEVS). The segment covering 373–384 (EQKKLKKKKKKD) has biased composition (basic residues). A compositionally biased stretch (basic and acidic residues) spans 385 to 395 (EKKNLLHRQCD). Acidic residues predominate over residues 396-420 (DTEANESDEEEEELRNEELDLEEES). Positions 455 to 472 (TKSKPKKQSKKKKQKKAA) are enriched in basic residues. 2 stretches are compositionally biased toward polar residues: residues 476–486 (MGNQKQMQATA) and 546–557 (GSRTSSAISSPE).

In Drosophila melanogaster (Fruit fly), this protein is Gametogenetin-binding protein 2-like.